Reading from the N-terminus, the 211-residue chain is Mediator-associated protein 2 (211 aa).

The disordered stretch occupies residues 128-211 (QQKLVGSVTN…KSKKKVKKEE (84 aa)). Low complexity predominate over residues 134–148 (SVTNSSKKSSNLTQS). Phosphoserine is present on Ser-173. Residues 189–198 (STSTVSGSSE) are compositionally biased toward low complexity. Positions 202–211 (KSKKKVKKEE) are enriched in basic residues.

In terms of assembly, associated with the Mediator complex.

The protein resides in the nucleus. This is Mediator-associated protein 2 from Arabidopsis thaliana (Mouse-ear cress).